The chain runs to 157 residues: Myosin regulatory light chain, striated adductor muscle (157 aa).

EF-hand domains follow at residues 16–51 and 85–120; these read KQIQ…LGRA and DSEE…MGDN. Ca(2+)-binding residues include D29, D31, D33, and D40.

In molluscan muscle, calcium regulation is associated with myosin rather than with actin. Muscle myosin contains two types of light chains: the catalytic light chain, essential for ATPase activity, and the regulatory light chain, a calcium-binding protein responsible for Ca(2+) dependent binding and Ca(2+) dependent Mg-ATPase activity. The protein is Myosin regulatory light chain, striated adductor muscle of Argopecten irradians (Bay scallop).